A 79-amino-acid chain; its full sequence is Small ribosomal subunit protein uS17 (79 aa).

This sequence belongs to the universal ribosomal protein uS17 family. Part of the 30S ribosomal subunit.

In terms of biological role, one of the primary rRNA binding proteins, it binds specifically to the 5'-end of 16S ribosomal RNA. This Rhizobium leguminosarum bv. trifolii (strain WSM2304) protein is Small ribosomal subunit protein uS17.